An 847-amino-acid polypeptide reads, in one-letter code: Nitrite reductase (NADH) large subunit (847 aa).

44–79 is an FAD binding site; sequence YDRVHLSSYFSHHTAEELSLVREGFYEKHGIKVLVG. 193 to 225 is a binding site for NAD(+); the sequence is LRRKIESMGVRVHTSKNTLEIVQEGVEARKTMR. [2Fe-2S] cluster is bound by residues cysteine 425, cysteine 427, cysteine 459, and cysteine 462. [4Fe-4S] cluster contacts are provided by cysteine 641, cysteine 647, cysteine 681, and cysteine 685. Residue cysteine 685 coordinates siroheme.

It belongs to the nitrite and sulfite reductase 4Fe-4S domain family. As to quaternary structure, homodimer which associates with NirD. It depends on siroheme as a cofactor. [2Fe-2S] cluster serves as cofactor. Requires [4Fe-4S] cluster as cofactor. The cofactor is FAD.

It catalyses the reaction NH4(+) + 3 NAD(+) + 2 H2O = nitrite + 3 NADH + 5 H(+). Its pathway is nitrogen metabolism; nitrate reduction (assimilation). This Escherichia coli (strain K12) protein is Nitrite reductase (NADH) large subunit (nirB).